The sequence spans 375 residues: Trichodiene synthase (375 aa).

This sequence belongs to the trichodiene synthase family.

It catalyses the reaction (2E,6E)-farnesyl diphosphate = trichodiene + diphosphate. Its pathway is sesquiterpene biosynthesis; trichothecene biosynthesis. In terms of biological role, TS is a member of the terpene cyclase group of enzymes. It catalyzes the isomerization and cyclization of farnesyl pyro-phosphate to form trichodiene, the first cyclic intermediate in the biosynthetic pathway for trichothecenes. It serves to branch trichothecene biosynthesis from the isoprenoid pathway. In Fusarium acaciae-mearnsii, this protein is Trichodiene synthase (TRI5).